Consider the following 470-residue polypeptide: TNF receptor-associated factor 4 (470 aa).

The segment at 18–58 (CPLCGKPMREPVQVSTCGHRFCDTCLQEFLSEGVFKCPEDQ) adopts an RING-type zinc-finger fold. 3 consecutive TRAF-type zinc fingers follow at residues 101–154 (GHLN…EAYE), 155–208 (SHEG…DTIQ), and 209–267 (SHQY…LAMG). K263 is covalently cross-linked (Glycyl lysine isopeptide (Lys-Gly) (interchain with G-Cter in ubiquitin)). Residues 277 to 310 (HLAMMCALVSRQRQELQELRRELEELSIGSDGVL) are a coiled coil. One can recognise an MATH domain in the interval 307 to 462 (DGVLIWKIGS…DDAVFIRASV (156 aa)). Phosphoserine is present on S426.

It belongs to the TNF receptor-associated factor family. B subfamily. In terms of assembly, homotrimer. Interacts with LTBR/TNFRSF3, NGFR/TNFRSF16, RPS6KB1 and TGFB1I1. Interacts with SMURF1. Interacts (via TRAF domain) with MAP3K4 (via kinase domain). Interacts with NCF1, TICAM1, IRAK1 and TRAF6, and is probably part of a complex containing TRAF4, NCF1, TICAM1, IRAK1 and TRAF6. Interacts (via MATH domain) with GP6 and GP1BB. Interacts with EGFR (via C-terminal region); this interaction promotes the formation of EGFR asymmetric dimers. Interacts with PKM; this interaction promotes PKM kinase activity. Polyubiquitinated, leading to its proteasomal degradation. Ubiquitinated at Lys-263 by the SCF(FBXL2) complex, leading to its degradation by the proteasome. In terms of tissue distribution, predominantly expressed in brain. Preferentially expressed by postmitotic undifferentiated neurons in developing central (CNS) and peripheral (PNS) nervous system, and in nervous tissues of sensory organs. In the embryo, protein expression was shown in brain, thymus, salivary glands and intestine. In the adult, protein expression is restricted to the brain (hippocampus and olfactory bulb).

The protein localises to the cytoplasm. It localises to the nucleus. The protein resides in the perinuclear region. Its subcellular location is the cell junction. It is found in the tight junction. The protein localises to the cell membrane. It localises to the cytoskeleton. It carries out the reaction S-ubiquitinyl-[E2 ubiquitin-conjugating enzyme]-L-cysteine + [acceptor protein]-L-lysine = [E2 ubiquitin-conjugating enzyme]-L-cysteine + N(6)-ubiquitinyl-[acceptor protein]-L-lysine.. Its pathway is protein degradation; proteasomal ubiquitin-dependent pathway. In terms of biological role, adapter protein with E3 ligase activity that is involved in many diverse biological processes including cell proliferation, migration, differentiation, DNA repair, platelet activation or apoptosis. Promotes EGFR-mediated signaling by facilitating the dimerization of EGFR and downstream AKT activation thereby promoting cell proliferation. Ubiquitinates SMURF2 through 'Lys-48'-linked ubiquitin chain leading to SMURF2 degradation through the proteasome and subsequently osteogenic differentiation. Promotes 'Lys-63'-mediated ubiquitination of CHK1 which in turn activates cell cycle arrest and activation of DNA repair. In addition, promotes an atypical 'Lys-29'-linked ubiquitination at the C-terminal end of IRS1 which is crucial for insulin-like growth factor (IGF) signal transduction. Regulates activation of NF-kappa-B in response to signaling through Toll-like receptors. Required for normal skeleton development, and for normal development of the respiratory tract. Required for activation of RPS6KB1 in response to TNF signaling. Modulates TRAF6 functions. Inhibits adipogenic differentiation by activating pyruvate kinase PKM activity and subsequently the beta-catenin signaling pathway. The protein is TNF receptor-associated factor 4 (Traf4) of Mus musculus (Mouse).